Reading from the N-terminus, the 454-residue chain is GA-binding protein alpha chain (454 aa).

Residues 168–251 (AALEGYRKEQ…SHLELLRKYV (84 aa)) form the PNT domain. Positions 297 to 316 (QRAPRISGEDRSSPGNRTGN) are disordered. Residue Ser-303 is modified to Phosphoserine. Residues 320 to 400 (IQLWQFLLEL…QGKRFVYKFV (81 aa)) constitute a DNA-binding region (ETS).

It belongs to the ETS family. Heterotetramer of two alpha and two beta subunits.

It is found in the nucleus. Functionally, transcription factor capable of interacting with purine rich repeats (GA repeats). Positively regulates transcription of transcriptional repressor RHIT/ZNF205. In terms of biological role, (Microbial infection) Necessary for the expression of the Adenovirus E4 gene. The protein is GA-binding protein alpha chain (GABPA) of Homo sapiens (Human).